A 348-amino-acid polypeptide reads, in one-letter code: Ferredoxin--NADP reductase (348 aa).

FAD-binding residues include threonine 26, glutamate 45, glutamine 53, tyrosine 58, alanine 98, phenylalanine 133, aspartate 299, and serine 340.

This sequence belongs to the ferredoxin--NADP reductase type 2 family. Homodimer. Requires FAD as cofactor.

The catalysed reaction is 2 reduced [2Fe-2S]-[ferredoxin] + NADP(+) + H(+) = 2 oxidized [2Fe-2S]-[ferredoxin] + NADPH. In Prosthecochloris aestuarii (strain DSM 271 / SK 413), this protein is Ferredoxin--NADP reductase.